We begin with the raw amino-acid sequence, 130 residues long: MAKVQYYGTGRRKKSIARVRLVPGEGKVLINKRDEEEYFGLETLRVIVNQPLVLTGTKDKFDVLVNVYGGGLTGQAGAIRHGISRALLKADESLRPELKKAGFLTRDPRMKERKKYGLKKARRAPQFSKR.

The span at Ala-101–Met-110 shows a compositional bias: basic and acidic residues. The interval Ala-101–Arg-130 is disordered. The segment covering Lys-111–Arg-130 has biased composition (basic residues).

It belongs to the universal ribosomal protein uS9 family.

In Clostridium tetani (strain Massachusetts / E88), this protein is Small ribosomal subunit protein uS9.